The sequence spans 204 residues: Thymidylate kinase (204 aa).

Gly11–Thr18 is a binding site for ATP.

The protein belongs to the thymidylate kinase family.

The enzyme catalyses dTMP + ATP = dTDP + ADP. The protein operates within pyrimidine metabolism; dTTP biosynthesis. This is Thymidylate kinase (TMK) from Bos taurus (Bovine).